Reading from the N-terminus, the 283-residue chain is Aspartate dehydrogenase domain-containing protein (283 aa).

A phosphoserine mark is found at S20 and S168.

This sequence belongs to the L-aspartate dehydrogenase family.

The sequence is that of Aspartate dehydrogenase domain-containing protein from Homo sapiens (Human).